Consider the following 72-residue polypeptide: Protein LITTLE ZIPPER 4 (72 aa).

Residues 14-44 adopt a coiled-coil conformation; it reads YIIKENERLRKKAQILNQENQQLLFELKQKL. Positions 42-72 are disordered; it reads QKLSKTKNSSGSNQGNNNNNNNLSSSSSASG. Over residues 49 to 72 the composition is skewed to low complexity; it reads NSSGSNQGNNNNNNNLSSSSSASG.

Interacts with REV.

In terms of biological role, competitive inhibitor of the HD-ZIPIII transcription factors in shoot apical meristem (SAM) development. Acts by forming non-functional heterodimers. Part of a negative feedback loop. Essential for proper functioning of stem cells in the SAM. The sequence is that of Protein LITTLE ZIPPER 4 from Arabidopsis thaliana (Mouse-ear cress).